The following is a 203-amino-acid chain: Holliday junction branch migration complex subunit RuvA (203 aa).

The tract at residues 1-63 (MIDYLRGTLT…EDVIRLYGFR (63 aa)) is domain I. The tract at residues 64-142 (TKEKRSLFEK…ELHPGLFSQK (79 aa)) is domain II. The tract at residues 143–152 (EEQPKPHEKN) is flexible linker. Residues 153 to 203 (DGNQALDEAMEALKALGYVEKELKKVKPKLEQETLTTDAYIKKALQLMLNR) are domain III.

Belongs to the RuvA family. Homotetramer. Forms an RuvA(8)-RuvB(12)-Holliday junction (HJ) complex. HJ DNA is sandwiched between 2 RuvA tetramers; dsDNA enters through RuvA and exits via RuvB. An RuvB hexamer assembles on each DNA strand where it exits the tetramer. Each RuvB hexamer is contacted by two RuvA subunits (via domain III) on 2 adjacent RuvB subunits; this complex drives branch migration. In the full resolvosome a probable DNA-RuvA(4)-RuvB(12)-RuvC(2) complex forms which resolves the HJ.

The protein resides in the cytoplasm. Its function is as follows. The RuvA-RuvB-RuvC complex processes Holliday junction (HJ) DNA during genetic recombination and DNA repair, while the RuvA-RuvB complex plays an important role in the rescue of blocked DNA replication forks via replication fork reversal (RFR). RuvA specifically binds to HJ cruciform DNA, conferring on it an open structure. The RuvB hexamer acts as an ATP-dependent pump, pulling dsDNA into and through the RuvAB complex. HJ branch migration allows RuvC to scan DNA until it finds its consensus sequence, where it cleaves and resolves the cruciform DNA. This chain is Holliday junction branch migration complex subunit RuvA, found in Halalkalibacterium halodurans (strain ATCC BAA-125 / DSM 18197 / FERM 7344 / JCM 9153 / C-125) (Bacillus halodurans).